Reading from the N-terminus, the 65-residue chain is Weak neurotoxin 6 (65 aa).

5 disulfide bridges follow: Cys-3-Cys-24, Cys-6-Cys-11, Cys-17-Cys-42, Cys-46-Cys-57, and Cys-58-Cys-63.

Belongs to the three-finger toxin family. Ancestral subfamily. Orphan group II sub-subfamily. Expressed by the venom gland.

The protein localises to the secreted. In terms of biological role, binds with low affinity to muscular (alpha-1-beta-1-delta-epsilon/CHRNA1-CHRNB1-CHRND-CHRNE) and very low affinity to neuronal (alpha-7/CHRNA7) nicotinic acetylcholine receptor (nAChR). This Naja naja (Indian cobra) protein is Weak neurotoxin 6.